The sequence spans 214 residues: Pyrrolidone-carboxylate peptidase (214 aa).

Catalysis depends on residues Glu78, Cys141, and His165.

The protein belongs to the peptidase C15 family. In terms of assembly, homotetramer.

Its subcellular location is the cytoplasm. It carries out the reaction Release of an N-terminal pyroglutamyl group from a polypeptide, the second amino acid generally not being Pro.. Functionally, removes 5-oxoproline from various penultimate amino acid residues except L-proline. In Streptococcus pneumoniae (strain 70585), this protein is Pyrrolidone-carboxylate peptidase.